Here is a 249-residue protein sequence, read N- to C-terminus: Expansin-A19 (249 aa).

The first 21 residues, 1 to 21, serve as a signal peptide directing secretion; it reads MGNIFLQLLAVVALCIAPARS. The 114-residue stretch at 41-154 folds into the Expansin-like EG45 domain; the sequence is GGACGYGNLY…QQVKCWRYGG (114 aa). Asn116 and Asn216 each carry an N-linked (GlcNAc...) asparagine glycan. Residues 164–243 form the Expansin-like CBD domain; that stretch reads YFELVLVTNM…GWSFGQTFST (80 aa).

Belongs to the expansin family. Expansin A subfamily.

The protein resides in the secreted. It is found in the cell wall. Its subcellular location is the membrane. May cause loosening and extension of plant cell walls by disrupting non-covalent bonding between cellulose microfibrils and matrix glucans. No enzymatic activity has been found. May be required for rapid internodal elongation in deepwater rice during submergence. The polypeptide is Expansin-A19 (EXPA19) (Oryza sativa subsp. japonica (Rice)).